The following is a 68-amino-acid chain: Conotoxin Em11.5 (68 aa).

Positions M1–T26 are cleaved as a signal peptide. Disulfide bonds link C29/C43, C36/C48, C42/C52, and C47/C56. Phenylalanine amide is present on F60. Positions A64–E68 are excised as a propeptide.

This sequence belongs to the conotoxin I2 superfamily. Expressed by the venom duct.

It is found in the secreted. This Conus emaciatus (False virgin cone) protein is Conotoxin Em11.5.